A 927-amino-acid polypeptide reads, in one-letter code: Calmodulin-binding transcription activator CBT (927 aa).

Positions 26–152 (YEKLVAEAAA…YRQTAEENAM (127 aa)) form a DNA-binding region, CG-1. A necessary and sufficient for nuclear localization region spans residues 70–96 (LYDRKVVRNFRKDGHNWKKKKDGRTVQ). Residues 72 to 79 (DRKVVRNF) carry the Nuclear localization signal motif. The ANK repeat unit spans residues 609–638 (SGWTALHWAAYHGRERMVATLLSAGANPSL). 2 consecutive IQ domains span residues 757–786 (EIVA…IQSH) and 799–828 (MRRQ…SVGI). The interval 826-845 (VGIVEKAILRWRKKRKGLRG) is calmodulin-binding. Residues 830–851 (EKAILRWRKKRKGLRGIASGMP) are necessary and sufficient for nuclear localization. The region spanning 882-911 (FNRSVVRVQALFRSYKAQQEYRRMKIAHEE) is the IQ 3 domain.

Belongs to the CAMTA family.

The protein localises to the nucleus. Transcriptional activation activity is strongly reduced by calmodulin. Its function is as follows. Transcription activator that binds calmodulin in a calcium-dependent manner in vitro. Binds to the DNA consensus sequence 5'-T[AC]CG[CT]GT[GT][GT][GT][GT]T[GT]CG-3'. The protein is Calmodulin-binding transcription activator CBT of Oryza sativa subsp. japonica (Rice).